A 205-amino-acid chain; its full sequence is Recombination protein RecR (205 aa).

The C4-type zinc finger occupies 58 to 75 (CSECQNVTDRDSDPCVLC). A Toprim domain is found at 83–182 (TVICVVESPV…AVSKIARGIP (100 aa)).

It belongs to the RecR family.

Its function is as follows. May play a role in DNA repair. It seems to be involved in an RecBC-independent recombinational process of DNA repair. It may act with RecF and RecO. This Chlorobium phaeobacteroides (strain DSM 266 / SMG 266 / 2430) protein is Recombination protein RecR.